A 200-amino-acid polypeptide reads, in one-letter code: 3-isopropylmalate dehydratase small subunit (200 aa).

This sequence belongs to the LeuD family. LeuD type 1 subfamily. Heterodimer of LeuC and LeuD.

It carries out the reaction (2R,3S)-3-isopropylmalate = (2S)-2-isopropylmalate. It participates in amino-acid biosynthesis; L-leucine biosynthesis; L-leucine from 3-methyl-2-oxobutanoate: step 2/4. In terms of biological role, catalyzes the isomerization between 2-isopropylmalate and 3-isopropylmalate, via the formation of 2-isopropylmaleate. The polypeptide is 3-isopropylmalate dehydratase small subunit (Aliivibrio salmonicida (strain LFI1238) (Vibrio salmonicida (strain LFI1238))).